The sequence spans 623 residues: C2H2-type transcription factor zfpA (623 aa).

The segment covering 202–219 (GLAVSSPMPNSGPHSRSV) has biased composition (polar residues). Disordered regions lie at residues 202–256 (GLAV…EKGR) and 468–493 (SNKANSSLGSRPIMGNHNAVTKNGKA). A compositionally biased stretch (low complexity) spans 227–239 (SISSTNSRRSQLS). The C2H2-type zinc finger occupies 255 to 276 (GRCPHPDCGRVFKDLKAHMLTH).

Its subcellular location is the nucleus. In terms of biological role, transcription factor involved in fungal growth and virulence potential. Negatively regulates antifungal drug susceptibility via transcriptional inhibition of the expressions of drug efflux pumps in a crzA-dependent way. Under the treatment of azoles, both zfpA and crzA transfer to nuclei and coregulate the expression of multidrug transporters and then keep normal drug susceptibility in fungal cells. The protein is C2H2-type transcription factor zfpA of Aspergillus fumigatus (strain CBS 144.89 / FGSC A1163 / CEA10) (Neosartorya fumigata).